A 457-amino-acid chain; its full sequence is Chromosomal replication initiator protein DnaA (457 aa).

Residues 1–77 form a domain I, interacts with DnaA modulators region; that stretch reads MDTNNNIEKE…EILSQNKVGM (77 aa). Residues 77–108 form a domain II region; it reads MHLAHSVDVRIEVAPKIQVNAQSNINYKATKT. The interval 109–323 is domain III, AAA+ region; sequence SVKDSYTFEN…GAIIKISVNA (215 aa). ATP contacts are provided by Gly-153, Gly-155, Lys-156, and Thr-157. The tract at residues 324-457 is domain IV, binds dsDNA; the sequence is NLMNATIDLN…DKKTAFNSSE (134 aa).

Belongs to the DnaA family. As to quaternary structure, oligomerizes as a right-handed, spiral filament on DNA at oriC.

The protein localises to the cytoplasm. Its function is as follows. Plays an essential role in the initiation and regulation of chromosomal replication. ATP-DnaA binds to the origin of replication (oriC) to initiate formation of the DNA replication initiation complex once per cell cycle. Binds the DnaA box (a 9 base pair repeat at the origin) and separates the double-stranded (ds)DNA. Forms a right-handed helical filament on oriC DNA; dsDNA binds to the exterior of the filament while single-stranded (ss)DNA is stabiized in the filament's interior. The ATP-DnaA-oriC complex binds and stabilizes one strand of the AT-rich DNA unwinding element (DUE), permitting loading of DNA polymerase. After initiation quickly degrades to an ADP-DnaA complex that is not apt for DNA replication. Binds acidic phospholipids. This is Chromosomal replication initiator protein DnaA from Helicobacter pylori (strain J99 / ATCC 700824) (Campylobacter pylori J99).